The following is a 398-amino-acid chain: Argininosuccinate synthase (398 aa).

9–17 (AYSGGLDTS) is a binding site for ATP. Tyr85 serves as a coordination point for L-citrulline. Position 115 (Gly115) interacts with ATP. L-aspartate contacts are provided by Thr117, Asn121, and Asp122. Residue Asn121 participates in L-citrulline binding. Residues Arg125, Ser173, Glu258, and Tyr270 each contribute to the L-citrulline site.

This sequence belongs to the argininosuccinate synthase family. Type 1 subfamily. Homotetramer.

It is found in the cytoplasm. The catalysed reaction is L-citrulline + L-aspartate + ATP = 2-(N(omega)-L-arginino)succinate + AMP + diphosphate + H(+). Its pathway is amino-acid biosynthesis; L-arginine biosynthesis; L-arginine from L-ornithine and carbamoyl phosphate: step 2/3. In Streptococcus pneumoniae (strain Hungary19A-6), this protein is Argininosuccinate synthase.